We begin with the raw amino-acid sequence, 177 residues long: Large ribosomal subunit protein uL6 (177 aa).

Over residues 157 to 171 (YKGKGVRYSDENVRR) the composition is skewed to basic and acidic residues. The disordered stretch occupies residues 157 to 177 (YKGKGVRYSDENVRRKEAKKK).

It belongs to the universal ribosomal protein uL6 family. As to quaternary structure, part of the 50S ribosomal subunit.

Its function is as follows. This protein binds to the 23S rRNA, and is important in its secondary structure. It is located near the subunit interface in the base of the L7/L12 stalk, and near the tRNA binding site of the peptidyltransferase center. In Pseudoalteromonas translucida (strain TAC 125), this protein is Large ribosomal subunit protein uL6.